The primary structure comprises 216 residues: Transmembrane emp24 domain-containing protein eca (216 aa).

The first 20 residues, 1–20 (MRNQFICVALLLCALNSACG), serve as a signal peptide directing secretion. Topologically, residues 21 to 183 (LYFHISETER…RHTSESTNSR (163 aa)) are lumenal. Residues 30–126 (RKCFIEEVPD…QLRVHLDIQV (97 aa)) form the GOLD domain. Residues 134–164 (ANVAQKEKLTELQLRIRQLLDQVDQITKEQN) are a coiled coil. A helical transmembrane segment spans residues 184–203 (VLWWSLAQTVVLVCMGFWQM). At 204–216 (RHLKSFFEAKKLV) the chain is on the cytoplasmic side. Residues 213 to 216 (KKLV) carry the Prevents secretion from ER motif.

Belongs to the EMP24/GP25L family.

The protein localises to the endoplasmic reticulum membrane. In terms of biological role, eca and bai are essential, though not redundant, for dorsoventral patterning of the embryo. Specifically required during early embryogenesis for the activity of maternal tkv, while the zygotic tkv is not affected. Involved in Golgi organization. This chain is Transmembrane emp24 domain-containing protein eca, found in Drosophila willistoni (Fruit fly).